Here is a 108-residue protein sequence, read N- to C-terminus: Holo-[acyl-carrier-protein] synthase (108 aa).

Mg(2+) contacts are provided by Asp-9 and Glu-52.

The protein belongs to the P-Pant transferase superfamily. AcpS family. Requires Mg(2+) as cofactor.

The protein localises to the cytoplasm. The enzyme catalyses apo-[ACP] + CoA = holo-[ACP] + adenosine 3',5'-bisphosphate + H(+). Transfers the 4'-phosphopantetheine moiety from coenzyme A to a Ser of acyl-carrier-protein. The protein is Holo-[acyl-carrier-protein] synthase of Coprothermobacter proteolyticus (strain ATCC 35245 / DSM 5265 / OCM 4 / BT).